We begin with the raw amino-acid sequence, 694 residues long: Lon-like protease BrxL (694 aa).

The protein belongs to the BrxL family.

In terms of biological role, BREX systems (bacteriophage exclusion) provide immunity against bacteriophage. Part of a type 1 BREX system which protects against dsDNA phage. This system allows phage adsorption but prevents phage DNA replication, without degradation of the phage DNA. Methylation of bacterial DNA by PglX guides self/non-self discrimination. When the brxA-brxB-brxC-pglX-pglZ-brxL genes are transformed into a susceptible E.coli strain (BW25113) they confer very high resistance to infection by bacteriophage VR7 and VpaE1, about 100-fold protection against lambda, T5 and T7 and no protection against RNA phage Qbeta, ssDNA phage M13 or dSDNA phage T4 and VR5. Glycosylated phage DNA is not susceptible to BREX. The BREX system does not confer resistance to lysogenic lambda phage, i.e. prophage that are integrated into the chromosomal DNA and then induced to form phage. Expression of this protein alone is toxic. The sequence is that of Lon-like protease BrxL from Escherichia coli O9:H4 (strain HS).